The sequence spans 594 residues: Cytoplasmic polyadenylation element-binding protein 1 (594 aa).

Residues 1–33 (MQHQVKACGDSKSTTRSLQGNRRSGAASLKKPS) are disordered. Residues 11 to 22 (SKSTTRSLQGNR) show a composition bias toward polar residues. 2 RRM domains span residues 257–364 (RKVF…PWRL) and 381–452 (RTVF…HAET). Residues 519-560 (TGDQTRILPRPPHHQSSHYSPRSHQMMNHDSMESSNQSRGNT) form a disordered region. The span at 535-560 (SHYSPRSHQMMNHDSMESSNQSRGNT) shows a compositional bias: polar residues.

As to quaternary structure, interacts with fbf-1.

Cytoplasmic polyadenylation element binding protein that binds to and regulates the translation of specific mRNAs. Essential for progression through meiosis. Involved in spermatogenesis. The sequence is that of Cytoplasmic polyadenylation element-binding protein 1 (cpb-1) from Caenorhabditis remanei (Caenorhabditis vulgaris).